The following is a 209-amino-acid chain: Orotate phosphoribosyltransferase (209 aa).

5-phospho-alpha-D-ribose 1-diphosphate is bound by residues R96, K100, H102, and 122-130 (EDLISTGGS). Orotate is bound at residue S126.

Belongs to the purine/pyrimidine phosphoribosyltransferase family. PyrE subfamily. In terms of assembly, homodimer. Mg(2+) serves as cofactor.

The enzyme catalyses orotidine 5'-phosphate + diphosphate = orotate + 5-phospho-alpha-D-ribose 1-diphosphate. Its pathway is pyrimidine metabolism; UMP biosynthesis via de novo pathway; UMP from orotate: step 1/2. Functionally, catalyzes the transfer of a ribosyl phosphate group from 5-phosphoribose 1-diphosphate to orotate, leading to the formation of orotidine monophosphate (OMP). The sequence is that of Orotate phosphoribosyltransferase from Streptococcus pyogenes serotype M5 (strain Manfredo).